The chain runs to 311 residues: Homoserine O-acetyltransferase (311 aa).

Residue Cys-142 is the Acyl-thioester intermediate of the active site. Residues Lys-163 and Ser-192 each contribute to the substrate site. His-235 (proton acceptor) is an active-site residue. Glu-237 is an active-site residue. Arg-249 serves as a coordination point for substrate.

Belongs to the MetA family.

The protein resides in the cytoplasm. The enzyme catalyses L-homoserine + acetyl-CoA = O-acetyl-L-homoserine + CoA. Its pathway is amino-acid biosynthesis; L-methionine biosynthesis via de novo pathway; O-acetyl-L-homoserine from L-homoserine: step 1/1. Transfers an acetyl group from acetyl-CoA to L-homoserine, forming acetyl-L-homoserine. This chain is Homoserine O-acetyltransferase, found in Lysinibacillus sphaericus (strain C3-41).